The sequence spans 1167 residues: MEEAVPAQTVEVIDPEVRAHVYSLLGGFNGEDADKYVLGDDALSCLRDIKRWLKLYDEKFNRMDVARCLGEANLVNGDLIQILSLWWREGQQSKYMTRIALACVELLVPLTWPLEIHGEMTVNHHRHIPYLQQAQVGYKRGILNMASCGILRAVIRIGLPSMAIPPSERTARDEGILKIMLYLLRNIAIITANARLAAEGEEEETSRSATINAFHDQDVFALLLTLCSNVSDDFNMLDIPLLEILFHMVRGIDVEKLFMNDAQRSAKRTDELNDLLRQESSMRREYAKNAPTRHGRFGTMIWVKRDDAKMSTVSGQDVLRDEQTTLYKMDQSKRWNKPRRGRKAQDMSVNNDFNTPVHISPSATTNLRMFVEEFLDSGFNPLFVHVRKAIERESIRVLDINKRHFLYTVSWFLGAERARRARQREKYAQSGKKPDNELEPDSFGLVAGVLNQETFVFLNRSMQNSLDNKEWDDLNAAMRCFTQILLTVQEMSQSPLEEDQEIAENIQNRIFYEETTHDRILAILRGYTDQGFGYLDACTELSHVFLRMLERYSKTNVDMQVRSRRRARKRKREEQLVNKGSDEEQESEDEDYAEAEKMSKERKFDFTRFAAKFSNQKCVDTFVAFTKFYKELNNEQLKRAHRYFYRIAFKQEMTVLLFRVDILNLFYRIIKGPGGMDSSKPIYKEWEELVRQLIRRLIKKLEQRPALITELLFSKINSTAFYLEYGFEKQTVTTSKRAPAELEVDPKAASTPEEKLSIVVAALVKDEQSALVKWISEVLGSAADEREAWELNSHDVDLAGPRDTQNPIITVKSQDNSFKRAMFQNAKLRLLMTLLKFDRLGQENVEGISWIIPSELKSDELRESKAVIDKALLIGNTDERDPNDLLRKKYSHEPRDGFSGQNLDVNFGSDSEGEDVIPDGPLFPANPRSKAHALNELKQKRKKRKDKGEEEPVDEETLEERRQARLENTRWRLAKIKSDLYVHASDEESDAEADQEFFRLEEERRNEQSERIKKALLLGRTEDAGNKARQRKRGKRSNEPNIAGEEETSGKRRRHSGGTNVELEEDDILMDDMEMPSRASSGEYSSNDADAIDKSMAAAEDELYFDDDLAFGRDRDKDETSVDRDGADASSPRKHNDGSESAEEDIPLAPPNRRRLRAGFVVESDSE.

Disordered regions lie at residues 332–353 (SKRW…NNDF), 563–594 (SRRR…DYAE), 889–969 (KYSH…LENT), 981–1093 (YVHA…DAID), and 1105–1167 (FDDD…SDSE). Residues 572 to 582 (REEQLVNKGSD) show a composition bias toward basic and acidic residues. Composition is skewed to acidic residues over residues 583–593 (EEQESEDEDYA) and 949–958 (EEEPVDEETL). Basic and acidic residues-rich tracts occupy residues 959–969 (EERRQARLENT) and 996–1013 (EFFR…ERIK). Residues 1062–1074 (ELEEDDILMDDME) show a composition bias toward acidic residues. Residues 1078–1088 (RASSGEYSSND) show a composition bias toward polar residues. A compositionally biased stretch (basic and acidic residues) spans 1110 to 1127 (AFGRDRDKDETSVDRDGA).

Belongs to the timeless family.

The protein resides in the nucleus. Functionally, involved in chromosome segregation during meiosis and DNA damage repair. This Emericella nidulans (strain FGSC A4 / ATCC 38163 / CBS 112.46 / NRRL 194 / M139) (Aspergillus nidulans) protein is Topoisomerase 1-associated factor 1 (tof1).